Reading from the N-terminus, the 432-residue chain is Glutamate-1-semialdehyde 2,1-aminomutase 2 (432 aa).

At Lys268 the chain carries N6-(pyridoxal phosphate)lysine.

It belongs to the class-III pyridoxal-phosphate-dependent aminotransferase family. HemL subfamily. In terms of assembly, homodimer. The cofactor is pyridoxal 5'-phosphate.

The protein localises to the cytoplasm. The enzyme catalyses (S)-4-amino-5-oxopentanoate = 5-aminolevulinate. Its pathway is porphyrin-containing compound metabolism; protoporphyrin-IX biosynthesis; 5-aminolevulinate from L-glutamyl-tRNA(Glu): step 2/2. This chain is Glutamate-1-semialdehyde 2,1-aminomutase 2, found in Listeria monocytogenes serovar 1/2a (strain ATCC BAA-679 / EGD-e).